We begin with the raw amino-acid sequence, 377 residues long: N-acetyldiaminopimelate deacetylase (377 aa).

Aspartate 70 is a catalytic residue. Glutamate 129 serves as the catalytic Proton acceptor.

This sequence belongs to the peptidase M20A family. N-acetyldiaminopimelate deacetylase subfamily.

It catalyses the reaction N-acetyl-(2S,6S)-2,6-diaminopimelate + H2O = (2S,6S)-2,6-diaminopimelate + acetate. Its pathway is amino-acid biosynthesis; L-lysine biosynthesis via DAP pathway; LL-2,6-diaminopimelate from (S)-tetrahydrodipicolinate (acetylase route): step 3/3. Catalyzes the conversion of N-acetyl-diaminopimelate to diaminopimelate and acetate. The sequence is that of N-acetyldiaminopimelate deacetylase from Streptococcus thermophilus (strain ATCC BAA-491 / LMD-9).